A 269-amino-acid chain; its full sequence is Shikimate dehydrogenase (NADP(+)) (269 aa).

Residues 17–19 (SKS) and Thr64 each bind shikimate. The active-site Proton acceptor is the Lys68. Glu80 is a binding site for NADP(+). Residues Asn89 and Asp105 each coordinate shikimate. Residues 130–134 (GAGGA), 154–159 (NRTRAK), and Met213 contribute to the NADP(+) site. Tyr215 provides a ligand contact to shikimate. Gly237 serves as a coordination point for NADP(+).

It belongs to the shikimate dehydrogenase family. Homodimer.

The enzyme catalyses shikimate + NADP(+) = 3-dehydroshikimate + NADPH + H(+). The protein operates within metabolic intermediate biosynthesis; chorismate biosynthesis; chorismate from D-erythrose 4-phosphate and phosphoenolpyruvate: step 4/7. Functionally, involved in the biosynthesis of the chorismate, which leads to the biosynthesis of aromatic amino acids. Catalyzes the reversible NADPH linked reduction of 3-dehydroshikimate (DHSA) to yield shikimate (SA). This chain is Shikimate dehydrogenase (NADP(+)), found in Neisseria meningitidis serogroup C / serotype 2a (strain ATCC 700532 / DSM 15464 / FAM18).